A 69-amino-acid polypeptide reads, in one-letter code: Ribosome modulation factor (69 aa).

The protein belongs to the ribosome modulation factor family.

Its subcellular location is the cytoplasm. During stationary phase, converts 70S ribosomes to an inactive dimeric form (100S ribosomes). This chain is Ribosome modulation factor, found in Marinomonas mediterranea (strain ATCC 700492 / JCM 21426 / NBRC 103028 / MMB-1).